We begin with the raw amino-acid sequence, 82 residues long: Small ribosomal subunit protein uS17 (82 aa).

It belongs to the universal ribosomal protein uS17 family. In terms of assembly, part of the 30S ribosomal subunit.

In terms of biological role, one of the primary rRNA binding proteins, it binds specifically to the 5'-end of 16S ribosomal RNA. This Sulfurimonas denitrificans (strain ATCC 33889 / DSM 1251) (Thiomicrospira denitrificans (strain ATCC 33889 / DSM 1251)) protein is Small ribosomal subunit protein uS17.